Reading from the N-terminus, the 374-residue chain is tRNA-specific 2-thiouridylase MnmA (374 aa).

ATP is bound by residues 12–19 and M38; that span reads GMSGGVDS. Positions 98 to 100 are interaction with target base in tRNA; it reads NPD. C103 (nucleophile) is an active-site residue. C103 and C202 are joined by a disulfide. Position 128 (G128) interacts with ATP. The interaction with tRNA stretch occupies residues 152–154; that stretch reads KDQ. Residue C202 is the Cysteine persulfide intermediate of the active site. An interaction with tRNA region spans residues 316–317; sequence RY.

It belongs to the MnmA/TRMU family.

The protein localises to the cytoplasm. The catalysed reaction is S-sulfanyl-L-cysteinyl-[protein] + uridine(34) in tRNA + AH2 + ATP = 2-thiouridine(34) in tRNA + L-cysteinyl-[protein] + A + AMP + diphosphate + H(+). Catalyzes the 2-thiolation of uridine at the wobble position (U34) of tRNA, leading to the formation of s(2)U34. The chain is tRNA-specific 2-thiouridylase MnmA from Vibrio vulnificus (strain YJ016).